The sequence spans 184 residues: Photosystem I assembly protein Ycf3 (184 aa).

TPR repeat units follow at residues 31–64 (AFAY…DEDQ), 68–101 (SYTL…NSNL), and 131–164 (MEIS…APDN).

This sequence belongs to the Ycf3 family.

It is found in the plastid. It localises to the chloroplast thylakoid membrane. Functionally, essential for the assembly of the photosystem I (PSI) complex. May act as a chaperone-like factor to guide the assembly of the PSI subunits. This chain is Photosystem I assembly protein Ycf3, found in Thalassiosira pseudonana (Marine diatom).